A 168-amino-acid chain; its full sequence is Diphosphoinositol polyphosphate phosphohydrolase 1 (168 aa).

Met1 carries the N-acetylmethionine modification. Residues Arg10, 18 to 20 (KKR), and 39 to 41 (SSR) each bind substrate. The 126-residue stretch at 17 to 142 (YKKRAACLCF…KPVQASYFEA (126 aa)) folds into the Nudix hydrolase domain. Mg(2+) is bound by residues Gly50 and Glu66. Residues 51–72 (GGMEPEEEPSVAAVREVCEEAG) carry the Nudix box motif. Glu69 acts as the Proton acceptor in catalysis. Glu70 provides a ligand contact to Mg(2+). Substrate-binding positions include 89 to 91 (RKH), Arg115, and Lys133.

The protein belongs to the Nudix hydrolase family. DIPP subfamily. Monomer. Mg(2+) is required as a cofactor. Requires Mn(2+) as cofactor. It depends on Zn(2+) as a cofactor.

It is found in the cytoplasm. The protein resides in the nucleus. It carries out the reaction diphospho-myo-inositol polyphosphate + H2O = myo-inositol polyphosphate + phosphate.. It catalyses the reaction 5-diphospho-1D-myo-inositol 1,2,3,4,6-pentakisphosphate + H2O = 1D-myo-inositol hexakisphosphate + phosphate + H(+). The enzyme catalyses 3,5-bis(diphospho)-1D-myo-inositol 1,2,4,6-tetrakisphosphate + H2O = 3-diphospho-1D-myo-inositol 1,2,4,5,6-pentakisphosphate + phosphate + 2 H(+). The catalysed reaction is [phosphate](n+1) + n H2O = (n+1) phosphate + n H(+). It carries out the reaction P(1),P(5)-bis(5'-adenosyl) pentaphosphate + H2O = ADP + ATP + 2 H(+). It catalyses the reaction P(1),P(6)-bis(5'-adenosyl) hexaphosphate + H2O = 2 ATP + 2 H(+). The enzyme catalyses P(1),P(4)-bis(5'-adenosyl) tetraphosphate + H2O = AMP + ATP + 2 H(+). The catalysed reaction is a 5'-end (N(7)-methyl 5'-triphosphoguanosine)-ribonucleoside in mRNA + H2O = N(7)-methyl-GMP + a 5'-end diphospho-ribonucleoside in mRNA + 2 H(+). It carries out the reaction a 5'-end (N(7)-methyl 5'-triphosphoguanosine)-ribonucleoside in mRNA + H2O = N(7)-methyl-GDP + a 5'-end phospho-ribonucleoside in mRNA + 2 H(+). Diphosphoinositol polyphosphate phosphohydrolase is inhibited by fluoride and InsP6. Functionally, cleaves a beta-phosphate from the diphosphate groups in PP-InsP5 (diphosphoinositol pentakisphosphate) and [PP]2-InsP4 (bisdiphosphoinositol tetrakisphosphate), suggesting that it may play a role in signal transduction. InsP6 (inositol hexakisphosphate) is not a substrate. Acts as a negative regulator of the ERK1/2 pathway. Also able to catalyze the hydrolysis of dinucleoside oligophosphates, with diadenosine 5',5'''-P1,P6-hexaphosphate (Ap6A) and diadenosine 5',5'''- P1,P5-pentaphosphate (Ap5A) being the preferred substrates. The major reaction products are ADP and p4a from Ap6A and ADP and ATP from Ap5A. Also able to hydrolyze 5- phosphoribose 1-diphosphate. Acts as a decapping enzyme that can hydrolyze both monomethylated and unmethylated capped RNAs. Hydrolyzes monomethylated capped RNA after both the alpha- and beta-phosphates generating m7GMP + ppRNA and m7GDP + pRNA. Modulates the stability of a subset of mRNAs implicated in cell motility. Divalent cations zinc, magnesium and manganese determine its substrate specificity. Exhibits endopolyphosphatase activity in the presence of zinc ions. Exhibits diphosphoinositol polyphosphate phosphohydrolase in the presence of magnesium ions and diadenosine hexaphosphate hydrolase activity in the presence of manganese ions. Plays an important role in limiting DNA damage and maintaining cell survival upon oxidative stress via its endopolyphosphatase activity. This chain is Diphosphoinositol polyphosphate phosphohydrolase 1, found in Rattus norvegicus (Rat).